The primary structure comprises 155 residues: NADPH-dependent 7-cyano-7-deazaguanine reductase (155 aa).

The active-site Thioimide intermediate is C53. D60 functions as the Proton donor in the catalytic mechanism. Substrate is bound by residues 75 to 77 (VES) and 94 to 95 (HE).

It belongs to the GTP cyclohydrolase I family. QueF type 1 subfamily.

It is found in the cytoplasm. It catalyses the reaction 7-aminomethyl-7-carbaguanine + 2 NADP(+) = 7-cyano-7-deazaguanine + 2 NADPH + 3 H(+). Its pathway is tRNA modification; tRNA-queuosine biosynthesis. Its function is as follows. Catalyzes the NADPH-dependent reduction of 7-cyano-7-deazaguanine (preQ0) to 7-aminomethyl-7-deazaguanine (preQ1). This chain is NADPH-dependent 7-cyano-7-deazaguanine reductase, found in Brucella anthropi (strain ATCC 49188 / DSM 6882 / CCUG 24695 / JCM 21032 / LMG 3331 / NBRC 15819 / NCTC 12168 / Alc 37) (Ochrobactrum anthropi).